Consider the following 385-residue polypeptide: 8-amino-7-oxononanoate synthase (385 aa).

Position 21 (Arg21) interacts with substrate. Gly108–Phe109 contacts pyridoxal 5'-phosphate. His133 is a substrate binding site. Positions 179, 207, and 233 each coordinate pyridoxal 5'-phosphate. Lys236 is subject to N6-(pyridoxal phosphate)lysine. A substrate-binding site is contributed by Thr352.

This sequence belongs to the class-II pyridoxal-phosphate-dependent aminotransferase family. BioF subfamily. As to quaternary structure, homodimer. It depends on pyridoxal 5'-phosphate as a cofactor.

The catalysed reaction is 6-carboxyhexanoyl-[ACP] + L-alanine + H(+) = (8S)-8-amino-7-oxononanoate + holo-[ACP] + CO2. The protein operates within cofactor biosynthesis; biotin biosynthesis. Functionally, catalyzes the decarboxylative condensation of pimeloyl-[acyl-carrier protein] and L-alanine to produce 8-amino-7-oxononanoate (AON), [acyl-carrier protein], and carbon dioxide. The protein is 8-amino-7-oxononanoate synthase of Salmonella paratyphi A (strain ATCC 9150 / SARB42).